Here is a 129-residue protein sequence, read N- to C-terminus: Glycine cleavage system H protein (129 aa).

The 83-residue stretch at 24-106 (TYTVGITEHA…YAGGWIFKIK (83 aa)) folds into the Lipoyl-binding domain. At K65 the chain carries N6-lipoyllysine.

Belongs to the GcvH family. The glycine cleavage system is composed of four proteins: P, T, L and H. It depends on (R)-lipoate as a cofactor.

Its function is as follows. The glycine cleavage system catalyzes the degradation of glycine. The H protein shuttles the methylamine group of glycine from the P protein to the T protein. This Escherichia coli O45:K1 (strain S88 / ExPEC) protein is Glycine cleavage system H protein.